The chain runs to 56 residues: Small ribosomal subunit protein uS14 (56 aa).

Positions 21, 24, 39, and 42 each coordinate Zn(2+).

It belongs to the universal ribosomal protein uS14 family. In terms of assembly, component of the small ribosomal subunit (SSU). Mature N.crassa ribosomes consist of a small (40S) and a large (60S) subunit. The 40S small subunit contains 1 molecule of ribosomal RNA (18S rRNA) and at least 32 different proteins. The large 60S subunit contains 3 rRNA molecules (26S, 5.8S and 5S rRNA) and at least 42 different proteins. Requires Zn(2+) as cofactor.

Its subcellular location is the cytoplasm. Functionally, component of the ribosome, a large ribonucleoprotein complex responsible for the synthesis of proteins in the cell. The small ribosomal subunit (SSU) binds messenger RNAs (mRNAs) and translates the encoded message by selecting cognate aminoacyl-transfer RNA (tRNA) molecules. The large subunit (LSU) contains the ribosomal catalytic site termed the peptidyl transferase center (PTC), which catalyzes the formation of peptide bonds, thereby polymerizing the amino acids delivered by tRNAs into a polypeptide chain. The nascent polypeptides leave the ribosome through a tunnel in the LSU and interact with protein factors that function in enzymatic processing, targeting, and the membrane insertion of nascent chains at the exit of the ribosomal tunnel. The polypeptide is Small ribosomal subunit protein uS14 (rps-29) (Neurospora crassa (strain ATCC 24698 / 74-OR23-1A / CBS 708.71 / DSM 1257 / FGSC 987)).